Consider the following 472-residue polypeptide: MSKNPIHIIGGGLAGSEAAWQAAQAGVPVVLHEMRPVRGTDAHKTDGLAELVCSNSFRSDDAENNAVGLLHAEMRLAGSLIMSAGDANQVPAGGALAVDRDGFSDAVTKKLEAHPLISIQREEVSGLPPADWDQAIIATGPLTAPSLARSIAEATGADALAFFDAIAPIIHFDTIDMDTCWFQSRYDKVGPGGTGKDYINCPMDKDQYLAFVQALIDGQKTEFKQWEGTPYFDGCLPIEIMAERGVETLRYGPMKPMGLTNAHNPMVKAYAVVQLRQDNALGTLYNMVGFQTKLKHAEQVRVFRTIPGLENADFARLGGLHRNTYINSPTLLDQSLQLKSRPGLRFAGQITGCEGYVESAAIGLLAGRFAAAERLGQAPSLPPLTTAFGALLNHITGGHIVSDDEPGKRSFQPMNVNFGLFPPVEAVKIEGKRLRGKDKTVAKRHAITSRALGDCRQWLGLPAPTETAEAAE.

10–15 is an FAD binding site; sequence GGGLAG.

The protein belongs to the MnmG family. TrmFO subfamily. FAD is required as a cofactor.

It localises to the cytoplasm. It catalyses the reaction uridine(54) in tRNA + (6R)-5,10-methylene-5,6,7,8-tetrahydrofolate + NADH + H(+) = 5-methyluridine(54) in tRNA + (6S)-5,6,7,8-tetrahydrofolate + NAD(+). The enzyme catalyses uridine(54) in tRNA + (6R)-5,10-methylene-5,6,7,8-tetrahydrofolate + NADPH + H(+) = 5-methyluridine(54) in tRNA + (6S)-5,6,7,8-tetrahydrofolate + NADP(+). Catalyzes the folate-dependent formation of 5-methyl-uridine at position 54 (M-5-U54) in all tRNAs. This Mesorhizobium japonicum (strain LMG 29417 / CECT 9101 / MAFF 303099) (Mesorhizobium loti (strain MAFF 303099)) protein is Methylenetetrahydrofolate--tRNA-(uracil-5-)-methyltransferase TrmFO.